The chain runs to 208 residues: Ras-related protein Rab-6A (208 aa).

Residue serine 2 is modified to N-acetylserine. 10 residues coordinate GTP: serine 23, valine 24, glycine 25, lysine 26, threonine 27, serine 28, aspartate 39, asparagine 40, tyrosine 42, and threonine 45. Threonine 27 contacts Mg(2+). Positions 32-50 match the Switch 1 motif; that stretch reads RFMYDSFDNTYQATIGIDF. Threonine 45 and aspartate 68 together coordinate Mg(2+). The Switch 2 motif lies at 69–88; sequence TAGQERFRSLIPSYIRDSAA. GTP is bound by residues glycine 71, asparagine 126, lysine 127, aspartate 129, serine 156, alanine 157, and lysine 158. Residues cysteine 206 and cysteine 208 are each lipidated (S-geranylgeranyl cysteine). Cysteine methyl ester is present on cysteine 208.

It belongs to the small GTPase superfamily. Rab family. Mg(2+) is required as a cofactor.

The protein localises to the golgi apparatus membrane. The enzyme catalyses GTP + H2O = GDP + phosphate + H(+). With respect to regulation, regulated by guanine nucleotide exchange factors (GEFs) which promote the exchange of bound GDP for free GTP. Regulated by GTPase activating proteins (GAPs) which increase the GTP hydrolysis activity. Inhibited by GDP dissociation inhibitors (GDIs). In terms of biological role, the small GTPases Rab are key regulators of intracellular membrane trafficking, from the formation of transport vesicles to their fusion with membranes. Rabs cycle between an inactive GDP-bound form and an active GTP-bound form that is able to recruit to membranes different sets of downstream effectors directly responsible for vesicle formation, movement, tethering and fusion. RAB6A acts as a regulator of COPI-independent retrograde transport from the Golgi apparatus towards the endoplasmic reticulum (ER). In Gallus gallus (Chicken), this protein is Ras-related protein Rab-6A (RAB6A).